A 254-amino-acid chain; its full sequence is Lipid uptake coordinator A (254 aa).

The next 4 membrane-spanning stretches (helical) occupy residues 5 to 25 (VAVL…FYFV), 44 to 64 (LRIA…FTLL), 85 to 105 (IMAH…EVWL), and 114 to 134 (LFGI…GFYL). The interval 143–254 (PPPKPLKPKK…SGVQVAKVDE (112 aa)) is disordered. The segment covering 148–163 (LKPKKPKQRRLRRKKT) has biased composition (basic residues). Residues 169-191 (AEPEAAEEAENTELAAQEDEEAV) are compositionally biased toward acidic residues. The span at 192 to 220 (EAPPESIESPGGEPESATREAPAAETATA) shows a compositional bias: low complexity. The span at 227–244 (LRNRRPTGKTSHRRRRTR) shows a compositional bias: basic residues.

As to quaternary structure, interacts with the Mce1 and Mce4 accessory subunits Rv0199/OmamA, Rv0177/Mam1C and Rv3492c/Mam4B.

It localises to the cell membrane. Functionally, required for the import of both fatty acids and cholesterol during growth in macrophages and in axenic culture. Facilitates the uptake of these lipids by stabilizing protein subunits of the Mce1 and Mce4 multi-subunit transporters, which transport fatty acids and cholesterol, respectively. Required for full virulence in vivo. This is Lipid uptake coordinator A from Mycobacterium tuberculosis (strain ATCC 25618 / H37Rv).